The following is a 390-amino-acid chain: MAEIHNGGELCDFMENGEIFSEHSCLNAHMGTENTGDTYDCDEYGENFPMLHNSAPAGETLSVLNQCRKAFSLPPNVHQRTWIGDKSFEYSDCEEAFVDQSHLQANRITHNGETLYEQKQCGRAFTYSTSHAVSVKMHTVEKPYECKECGKFFRYSSYLNSHMRTHTGEKPYECKECGKCFTVSSHLVEHVRIHTGEKPYQCKECGRAFAGRSGLTKHVRIHTGEKPYECNECGKAYNRFYLLTEHFKTHTEEKPFECKVCGKSFRSSSCLKNHFRIHTGIKPYKCKECGKAFTVSSSLHNHVKIHTGEKPYECKDCGKAFATSSQLIEHIRTHTGEKPYICKECGKTFRASSHLQKHVRIHTGEKPYICNECGKAYNRFYLLTKHLKTH.

Residues Phe88–His110 form a C2H2-type 1; degenerate zinc finger. The segment at Tyr116–His138 adopts a C2H2-type 2; degenerate zinc-finger fold. C2H2-type zinc fingers lie at residues Tyr144–His166, Tyr172–His194, Tyr200–His222, Tyr228–His250, Phe256–His278, Tyr284–His306, Tyr312–His334, Tyr340–His362, and Tyr368–His390.

The protein belongs to the krueppel C2H2-type zinc-finger protein family.

Its subcellular location is the nucleus. In terms of biological role, may be involved in transcriptional regulation. The protein is Zinc finger protein 121 (ZNF121) of Homo sapiens (Human).